The primary structure comprises 332 residues: MNPLIFKEDCPLDLIAVGRLCVDLNANETQRPMEATRTFTKYVGGSPANIAIGATRLGLQTGFIGKVSDDQMGRFITRYLQDNNINTDQICIDRTGAVTGLAFTEIKSPEDCSILMYRDNVADLNLDPTEVSEDYIKQSKALLISGTALAKSPSREAVFLALEYARKHDVVVFFDVDYRPYTWQSEAETAVYYNLAAEKSDVIIGTREEFDMMEKLLNYEESNDQVTAERWFSHHAKIVVIKHGGDGSIAYTRDGQSHRGGIFKTKVLKTFGAGDSYASAFIYGLMQGLEIPQAMRLGGASASIVISKHSCSDAMPTRAEISAFMEIAEEIV.

The protein belongs to the carbohydrate kinase PfkB family.

The enzyme catalyses 5-dehydro-2-deoxy-D-gluconate + ATP = 6-phospho-5-dehydro-2-deoxy-D-gluconate + ADP + H(+). It functions in the pathway polyol metabolism; myo-inositol degradation into acetyl-CoA; acetyl-CoA from myo-inositol: step 5/7. Functionally, catalyzes the phosphorylation of 5-dehydro-2-deoxy-D-gluconate (2-deoxy-5-keto-D-gluconate or DKG) to 6-phospho-5-dehydro-2-deoxy-D-gluconate (DKGP). This chain is 5-dehydro-2-deoxygluconokinase 2, found in Bacillus cereus (strain ZK / E33L).